The primary structure comprises 348 residues: Sulfate/thiosulfate import ATP-binding protein CysA (348 aa).

Residues 3–237 (IRIQELCKQF…PSSPFVYSFV (235 aa)) form the ABC transporter domain. 35-42 (GPSGSGKT) lines the ATP pocket.

Belongs to the ABC transporter superfamily. Sulfate/tungstate importer (TC 3.A.1.6) family. As to quaternary structure, the complex is composed of two ATP-binding proteins (CysA), two transmembrane proteins (CysT and CysW) and a solute-binding protein (CysP).

The protein resides in the cell inner membrane. The catalysed reaction is sulfate(out) + ATP + H2O = sulfate(in) + ADP + phosphate + H(+). It carries out the reaction thiosulfate(out) + ATP + H2O = thiosulfate(in) + ADP + phosphate + H(+). Part of the ABC transporter complex CysAWTP involved in sulfate/thiosulfate import. Responsible for energy coupling to the transport system. The polypeptide is Sulfate/thiosulfate import ATP-binding protein CysA (Xylella fastidiosa (strain 9a5c)).